A 125-amino-acid polypeptide reads, in one-letter code: MPPKDDKKKKDAGKSAKKDKDPVNKSGGKAKKKKWSKGKVRDKLNNLVLFDKATYDKLCKEVPNYKLITPAVVSERLKIRGSLARAALQELLSKGLIKLVSKHRAQVIYTRNTKGGDAPAAGEDA.

The span at 1–23 (MPPKDDKKKKDAGKSAKKDKDPV) shows a compositional bias: basic and acidic residues. The segment at 1–38 (MPPKDDKKKKDAGKSAKKDKDPVNKSGGKAKKKKWSKG) is disordered. Positions 28–38 (GKAKKKKWSKG) are enriched in basic residues. Position 43 is an N6-acetyllysine (lysine 43). At lysine 52 the chain carries N6-acetyllysine; alternate. Lysine 52 is modified (N6-succinyllysine; alternate). N6-acetyllysine is present on residues lysine 60 and lysine 66. Lysine 94 is subject to N6-acetyllysine; alternate. Lysine 94 bears the N6-succinyllysine; alternate mark.

The protein belongs to the eukaryotic ribosomal protein eS25 family. Component of the small ribosomal subunit.

It localises to the cytoplasm. Functionally, component of the small ribosomal subunit. The ribosome is a large ribonucleoprotein complex responsible for the synthesis of proteins in the cell. The polypeptide is Small ribosomal subunit protein eS25 (RPS25) (Homo sapiens (Human)).